The chain runs to 270 residues: tRNA (guanine-N(1)-)-methyltransferase (270 aa).

Residues glycine 113 and 133–138 (IGDYVL) contribute to the S-adenosyl-L-methionine site. The disordered stretch occupies residues 251 to 270 (APTEGTGLIHHRDVEGPGEG). Basic and acidic residues predominate over residues 260 to 270 (HHRDVEGPGEG).

It belongs to the RNA methyltransferase TrmD family. As to quaternary structure, homodimer.

It localises to the cytoplasm. The enzyme catalyses guanosine(37) in tRNA + S-adenosyl-L-methionine = N(1)-methylguanosine(37) in tRNA + S-adenosyl-L-homocysteine + H(+). Its function is as follows. Specifically methylates guanosine-37 in various tRNAs. In Frankia casuarinae (strain DSM 45818 / CECT 9043 / HFP020203 / CcI3), this protein is tRNA (guanine-N(1)-)-methyltransferase.